The sequence spans 410 residues: Multifunctional CCA protein (410 aa).

Positions 8 and 11 each coordinate ATP. Residues Gly-8 and Arg-11 each contribute to the CTP site. Mg(2+)-binding residues include Glu-21 and Asp-23. Arg-91, Arg-137, and Arg-140 together coordinate ATP. CTP is bound by residues Arg-91, Arg-137, and Arg-140. The 102-residue stretch at 228-329 folds into the HD domain; that stretch reads TGVHVLSVLR…LELLQRFDVF (102 aa).

This sequence belongs to the tRNA nucleotidyltransferase/poly(A) polymerase family. Bacterial CCA-adding enzyme type 1 subfamily. In terms of assembly, monomer. Can also form homodimers and oligomers. It depends on Mg(2+) as a cofactor. Ni(2+) serves as cofactor.

The catalysed reaction is a tRNA precursor + 2 CTP + ATP = a tRNA with a 3' CCA end + 3 diphosphate. The enzyme catalyses a tRNA with a 3' CCA end + 2 CTP + ATP = a tRNA with a 3' CCACCA end + 3 diphosphate. Functionally, catalyzes the addition and repair of the essential 3'-terminal CCA sequence in tRNAs without using a nucleic acid template. Adds these three nucleotides in the order of C, C, and A to the tRNA nucleotide-73, using CTP and ATP as substrates and producing inorganic pyrophosphate. tRNA 3'-terminal CCA addition is required both for tRNA processing and repair. Also involved in tRNA surveillance by mediating tandem CCA addition to generate a CCACCA at the 3' terminus of unstable tRNAs. While stable tRNAs receive only 3'-terminal CCA, unstable tRNAs are marked with CCACCA and rapidly degraded. This is Multifunctional CCA protein from Ectopseudomonas mendocina (strain ymp) (Pseudomonas mendocina).